The sequence spans 380 residues: Succinyl-diaminopimelate desuccinylase (380 aa).

Residue His69 coordinates Zn(2+). Residue Asp71 is part of the active site. Position 102 (Asp102) interacts with Zn(2+). Residue Glu135 is the Proton acceptor of the active site. Glu136, Glu164, and His353 together coordinate Zn(2+).

Belongs to the peptidase M20A family. DapE subfamily. In terms of assembly, homodimer. Zn(2+) is required as a cofactor. The cofactor is Co(2+).

It catalyses the reaction N-succinyl-(2S,6S)-2,6-diaminopimelate + H2O = (2S,6S)-2,6-diaminopimelate + succinate. It participates in amino-acid biosynthesis; L-lysine biosynthesis via DAP pathway; LL-2,6-diaminopimelate from (S)-tetrahydrodipicolinate (succinylase route): step 3/3. In terms of biological role, catalyzes the hydrolysis of N-succinyl-L,L-diaminopimelic acid (SDAP), forming succinate and LL-2,6-diaminopimelate (DAP), an intermediate involved in the bacterial biosynthesis of lysine and meso-diaminopimelic acid, an essential component of bacterial cell walls. This chain is Succinyl-diaminopimelate desuccinylase, found in Cereibacter sphaeroides (strain ATCC 17025 / ATH 2.4.3) (Rhodobacter sphaeroides).